The chain runs to 449 residues: Histidinol dehydrogenase (449 aa).

NAD(+) is bound by residues Tyr-135, Gln-199, and Asn-229. Residues Thr-252, Gln-274, and His-277 each contribute to the substrate site. Zn(2+) is bound by residues Gln-274 and His-277. Residues Glu-343 and His-344 each act as proton acceptor in the active site. His-344, Asp-377, Glu-431, and His-436 together coordinate substrate. Residue Asp-377 coordinates Zn(2+). His-436 serves as a coordination point for Zn(2+).

Belongs to the histidinol dehydrogenase family. It depends on Zn(2+) as a cofactor.

It catalyses the reaction L-histidinol + 2 NAD(+) + H2O = L-histidine + 2 NADH + 3 H(+). The protein operates within amino-acid biosynthesis; L-histidine biosynthesis; L-histidine from 5-phospho-alpha-D-ribose 1-diphosphate: step 9/9. Functionally, catalyzes the sequential NAD-dependent oxidations of L-histidinol to L-histidinaldehyde and then to L-histidine. The chain is Histidinol dehydrogenase from Corynebacterium diphtheriae (strain ATCC 700971 / NCTC 13129 / Biotype gravis).